A 224-amino-acid chain; its full sequence is MSNYQQESSYQYSDRSNNGQQQEQQEKKEVEHSSYTHTDVKVNMPNLIAPFISSSAGLAQELVGEGFQASVSRITGASGELTVIDTEAETEEARRDMEAKAREQELLSRQFEKELERKTEAYRKQQEVETEKIRKELEKQHLRDVEFRKELMEQTIENQKRQIDLEARYAKKELERERNKVKRVLERSKFHTDIQVNMEAAAGSTHSGSSSVAVSESEKFQTNN.

Low complexity predominate over residues 1–13 (MSNYQQESSYQYS). The interval 1–38 (MSNYQQESSYQYSDRSNNGQQQEQQEKKEVEHSSYTHT) is disordered. Residues 24–38 (QQEKKEVEHSSYTHT) show a composition bias toward basic and acidic residues. A coiled-coil region spans residues 83 to 191 (VIDTEAETEE…KRVLERSKFH (109 aa)). 2 CAHS motif regions span residues 122–140 (YRKQQEVETEKIRKELEKQ) and 159–177 (QKRQIDLEARYAKKELERE). Residues 200 to 215 (AAAGSTHSGSSSVAVS) show a composition bias toward low complexity. The disordered stretch occupies residues 200-224 (AAAGSTHSGSSSVAVSESEKFQTNN).

Belongs to the Cytosolic-abundant heat soluble protein (CAHS) family.

The protein resides in the cytoplasm. Its function is as follows. CAHS proteins are cytosolic heat soluble proteins that seem to contribute to the anhydrobiosis in tardigrades, but their specific mechanisms are yet to be identified. It is possible that protection during anhydrobiosis might occur via the stabilization of vitrifying small molecules such as sugars, but not via the direct glass transition of CAHS proteins themselves. The protein is Cytosolic-abundant heat soluble protein 77580 of Hypsibius exemplaris (Freshwater tardigrade).